Consider the following 369-residue polypeptide: Flagellar P-ring protein (369 aa).

The first 24 residues, 1–24, serve as a signal peptide directing secretion; it reads MKTLHRCIGVALLALGALAGTAHA.

This sequence belongs to the FlgI family. The basal body constitutes a major portion of the flagellar organelle and consists of four rings (L,P,S, and M) mounted on a central rod.

The protein localises to the periplasm. The protein resides in the bacterial flagellum basal body. Its function is as follows. Assembles around the rod to form the L-ring and probably protects the motor/basal body from shearing forces during rotation. This is Flagellar P-ring protein from Ralstonia nicotianae (strain ATCC BAA-1114 / GMI1000) (Ralstonia solanacearum).